A 571-amino-acid polypeptide reads, in one-letter code: Cytoplasmic polyadenylation element-binding protein 2 (571 aa).

2 disordered regions span residues 1-23 (MSKSRRLFLSMQGDDDFWGNGDR) and 51-75 (FKQNKLGRQQSESRHENEENKVSQE). Over residues 61–75 (SESRHENEENKVSQE) the composition is skewed to basic and acidic residues. Residues 435 to 517 (LVAFIGGVPR…KRVEIKPYFF (83 aa)) form the RRM domain.

Its function is as follows. Cytoplasmic polyadenylation element binding protein that binds to and regulates the translation of specific mRNAs. The protein is Cytoplasmic polyadenylation element-binding protein 2 (cpb-2) of Caenorhabditis remanei (Caenorhabditis vulgaris).